Here is a 333-residue protein sequence, read N- to C-terminus: Ribose-phosphate pyrophosphokinase (333 aa).

58–60 (DGE) serves as a coordination point for ATP. 2 residues coordinate Mg(2+): His-151 and Asp-190. Residue Lys-214 is part of the active site. D-ribose 5-phosphate-binding positions include Arg-216, Asp-240, and 244–248 (DTAGT).

The protein belongs to the ribose-phosphate pyrophosphokinase family. Class I subfamily. Homohexamer. The cofactor is Mg(2+).

The protein localises to the cytoplasm. It carries out the reaction D-ribose 5-phosphate + ATP = 5-phospho-alpha-D-ribose 1-diphosphate + AMP + H(+). It functions in the pathway metabolic intermediate biosynthesis; 5-phospho-alpha-D-ribose 1-diphosphate biosynthesis; 5-phospho-alpha-D-ribose 1-diphosphate from D-ribose 5-phosphate (route I): step 1/1. Involved in the biosynthesis of the central metabolite phospho-alpha-D-ribosyl-1-pyrophosphate (PRPP) via the transfer of pyrophosphoryl group from ATP to 1-hydroxyl of ribose-5-phosphate (Rib-5-P). This is Ribose-phosphate pyrophosphokinase from Synechocystis sp. (strain ATCC 27184 / PCC 6803 / Kazusa).